Here is a 289-residue protein sequence, read N- to C-terminus: 4-diphosphocytidyl-2-C-methyl-D-erythritol kinase (289 aa).

Lysine 10 is an active-site residue. ATP is bound at residue 94-104 (PVAAGLAGGSS). Aspartate 136 is a catalytic residue.

This sequence belongs to the GHMP kinase family. IspE subfamily.

It carries out the reaction 4-CDP-2-C-methyl-D-erythritol + ATP = 4-CDP-2-C-methyl-D-erythritol 2-phosphate + ADP + H(+). It functions in the pathway isoprenoid biosynthesis; isopentenyl diphosphate biosynthesis via DXP pathway; isopentenyl diphosphate from 1-deoxy-D-xylulose 5-phosphate: step 3/6. Its function is as follows. Catalyzes the phosphorylation of the position 2 hydroxy group of 4-diphosphocytidyl-2C-methyl-D-erythritol. This is 4-diphosphocytidyl-2-C-methyl-D-erythritol kinase from Bacillus pumilus (strain SAFR-032).